The primary structure comprises 273 residues: 2-dehydro-3-deoxyphosphooctonate aldolase (273 aa).

The protein belongs to the KdsA family.

Its subcellular location is the cytoplasm. It catalyses the reaction D-arabinose 5-phosphate + phosphoenolpyruvate + H2O = 3-deoxy-alpha-D-manno-2-octulosonate-8-phosphate + phosphate. The protein operates within carbohydrate biosynthesis; 3-deoxy-D-manno-octulosonate biosynthesis; 3-deoxy-D-manno-octulosonate from D-ribulose 5-phosphate: step 2/3. Its pathway is bacterial outer membrane biogenesis; lipopolysaccharide biosynthesis. This Desulfatibacillum aliphaticivorans protein is 2-dehydro-3-deoxyphosphooctonate aldolase.